Here is a 223-residue protein sequence, read N- to C-terminus: Probable 3-beta-hydroxysteroid-Delta(8),Delta(7)-isomerase (223 aa).

Helical transmembrane passes span 28–48, 58–78, 115–135, and 175–195; these read IVSIYLGSSLLVVSLVWLLFG, LMCWWTFTGLTHVILEGYFVF, VEGITAVIVGPASLLAIYAIA, and FYYYSYYIGANCWWVLIPSLI. Residues 54–196 form the EXPERA domain; sequence LDKLLMCWWT…WWVLIPSLIS (143 aa).

It belongs to the EBP family.

Its subcellular location is the endoplasmic reticulum membrane. The enzyme catalyses lathosterol = 5alpha-cholest-8-en-3beta-ol. The protein operates within steroid biosynthesis; sterol biosynthesis. Functionally, catalyzes the conversion of Delta(8)-sterols to their corresponding Delta(7)-isomers. The chain is Probable 3-beta-hydroxysteroid-Delta(8),Delta(7)-isomerase from Arabidopsis thaliana (Mouse-ear cress).